The sequence spans 315 residues: uncharacterized protein (315 aa).

Polar residues predominate over residues 1-23 (MSNTDALNTANTQITENVDTSSM). Residues 1–31 (MSNTDALNTANTQITENVDTSSMKVEKTHDS) are disordered.

This is an uncharacterized protein from Acanthamoeba polyphaga mimivirus (APMV).